The chain runs to 217 residues: Uracil-DNA glycosylase (217 aa).

Aspartate 62 serves as the catalytic Proton acceptor.

It belongs to the uracil-DNA glycosylase (UDG) superfamily. UNG family.

It localises to the cytoplasm. It carries out the reaction Hydrolyzes single-stranded DNA or mismatched double-stranded DNA and polynucleotides, releasing free uracil.. Excises uracil residues from the DNA which can arise as a result of misincorporation of dUMP residues by DNA polymerase or due to deamination of cytosine. This Streptococcus pyogenes serotype M3 (strain ATCC BAA-595 / MGAS315) protein is Uracil-DNA glycosylase.